Consider the following 356-residue polypeptide: D-alanine--D-alanine ligase (356 aa).

The 206-residue stretch at 134–339 folds into the ATP-grasp domain; it reads KQLFEHRGLP…YSDLITKLID (206 aa). 167 to 222 is an ATP binding site; it reads KDKLTYPVFVKPANLGSSVGISKCNNEDELKSGIEEAFQFDRKLVIEQGINAREVE. Mg(2+)-binding residues include Asp293, Glu306, and Asn308.

This sequence belongs to the D-alanine--D-alanine ligase family. Requires Mg(2+) as cofactor. Mn(2+) serves as cofactor.

The protein localises to the cytoplasm. The enzyme catalyses 2 D-alanine + ATP = D-alanyl-D-alanine + ADP + phosphate + H(+). It participates in cell wall biogenesis; peptidoglycan biosynthesis. Cell wall formation. The protein is D-alanine--D-alanine ligase of Staphylococcus haemolyticus (strain JCSC1435).